The primary structure comprises 238 residues: UPF0173 metal-dependent hydrolase Helmi_16730 (238 aa).

It belongs to the UPF0173 family.

The sequence is that of UPF0173 metal-dependent hydrolase Helmi_16730 from Heliobacterium modesticaldum (strain ATCC 51547 / Ice1).